The sequence spans 201 residues: Small ribosomal subunit protein uS4 (201 aa).

The region spanning 91-157 is the S4 RNA-binding domain; that stretch reads SRLDNVVYRA…LPFQVARETV (67 aa).

It belongs to the universal ribosomal protein uS4 family. In terms of assembly, part of the 30S ribosomal subunit. Contacts protein S5. The interaction surface between S4 and S5 is involved in control of translational fidelity.

Functionally, one of the primary rRNA binding proteins, it binds directly to 16S rRNA where it nucleates assembly of the body of the 30S subunit. Its function is as follows. With S5 and S12 plays an important role in translational accuracy. This chain is Small ribosomal subunit protein uS4, found in Rhodococcus erythropolis (strain PR4 / NBRC 100887).